A 291-amino-acid polypeptide reads, in one-letter code: Elongation factor Ts (291 aa).

The tract at residues 80–83 is involved in Mg(2+) ion dislocation from EF-Tu; the sequence is TDFV.

This sequence belongs to the EF-Ts family.

The protein localises to the cytoplasm. In terms of biological role, associates with the EF-Tu.GDP complex and induces the exchange of GDP to GTP. It remains bound to the aminoacyl-tRNA.EF-Tu.GTP complex up to the GTP hydrolysis stage on the ribosome. The polypeptide is Elongation factor Ts (Limosilactobacillus reuteri (strain DSM 20016) (Lactobacillus reuteri)).